The chain runs to 1087 residues: MDLYSTPAAALDRFVARRLQPRKEFVEKARRALGALAAALRERGGRLGAAAPRVLKTVKGGSSGRGTALKGGCDSELVIFLDCFKSYVDQRARRAEILSEMRASLESWWQNPVPGLRLTFPEQSVPGALQFRLTSVDLEDWMDVSLVPAFNVLGQAGSGVKPKPQVYSTLLNSGCQGGEHAACFTELRRNFVNIRPAKLKNLILLVKHWYHQVCLQGLWKETLPPVYALELLTIFAWEQGCKKDAFSLAEGLRTVLGLIQQHQHLCVFWTVNYGFEDPAVGQFLQRQLKRPRPVILDPADPTWDLGNGAAWHWDLLAQEAASCYDHPCFLRGMGDPVQSWKGPGLPRAGCSGLGHPIQLDPNQKTPENSKSLNAVYPRAGSKPPSCPAPGPTGAASIVPSVPGMALDLSQIPTKELDRFIQDHLKPSPQFQEQVKKAIDIILRCLHENCVHKASRVSKGGSFGRGTDLRDGCDVELIIFLNCFTDYKDQGPRRAEILDEMRAQLESWWQDQVPSLSLQFPEQNVPEALQFQLVSTALKSWTDVSLLPAFDAVGQLSSGTKPNPQVYSRLLTSGCQEGEHKACFAELRRNFMNIRPVKLKNLILLVKHWYRQVAAQNKGKGPAPASLPPAYALELLTIFAWEQGCRQDCFNMAQGFRTVLGLVQQHQQLCVYWTVNYSTEDPAMRMHLLGQLRKPRPLVLDPADPTWNVGHGSWELLAQEAAALGMQACFLSRDGTSVQPWDVMPALLYQTPAGDLDKFISEFLQPNRQFLAQVNKAVDTICSFLKENCFRNSPIKVIKVVKGGSSAKGTALRGRSDADLVVFLSCFSQFTEQGNKRAEIISEIRAQLEACQQERQFEVKFEVSKWENPRVLSFSLTSQTMLDQSVDFDVLPAFDALGQLVSGSRPSSQVYVDLIHSYSNAGEYSTCFTELQRDFIISRPTKLKSLIRLVKHWYQQCTKISKGRGSLPPQHGLELLTVYAWEQGGKDSQFNMAEGFRTVLELVTQYRQLCIYWTINYNAKDKTVGDFLKQQLQKPRPIILDPADPTGNLGHNARWDLLAKEAAACTSALCCMGRNGIPIQPWPVKAAV.

The residue at position 1 (methionine 1) is an N-acetylmethionine. The segment at 6–343 is OAS domain 1; sequence TPAAALDRFV…GDPVQSWKGP (338 aa). Interaction with dsRNA stretches follow at residues 12 to 57 and 186 to 200; these read DRFV…VLKT and ELRR…AKLK. The interval 344–410 is linker; it reads GLPRAGCSGL…VPGMALDLSQ (67 aa). Position 365 is a phosphothreonine (threonine 365). 2 OAS domain regions span residues 411-742 and 750-1084; these read IPTK…PWDV and TPAG…WPVK. Residue serine 804 coordinates ATP. 3 residues coordinate Mg(2+): aspartate 816, aspartate 818, and aspartate 888. Arginine 947, lysine 950, and glutamine 969 together coordinate ATP.

The protein belongs to the 2-5A synthase family. In terms of assembly, monomer. Mg(2+) serves as cofactor. As to expression, present at high level in placenta trophoblast.

Its subcellular location is the cytoplasm. It is found in the nucleus. It catalyses the reaction 3 ATP = 5'-triphosphoadenylyl-(2'-&gt;5')-adenylyl-(2'-&gt;5')-adenosine + 2 diphosphate. With respect to regulation, produced as a latent enzyme which is activated by dsRNA generated during the course of viral infection. Strongly activated by long dsRNAs at least 50 nucleotides in length. ssRNA does not activate the enzyme. Functionally, interferon-induced, dsRNA-activated antiviral enzyme which plays a critical role in cellular innate antiviral response. In addition, it may also play a role in other cellular processes such as apoptosis, cell growth, differentiation and gene regulation. Synthesizes preferentially dimers of 2'-5'-oligoadenylates (2-5A) from ATP which then bind to the inactive monomeric form of ribonuclease L (RNase L) leading to its dimerization and subsequent activation. Activation of RNase L leads to degradation of cellular as well as viral RNA, resulting in the inhibition of protein synthesis, thus terminating viral replication. Can mediate the antiviral effect via the classical RNase L-dependent pathway or an alternative antiviral pathway independent of RNase L. Displays antiviral activity against Chikungunya virus (CHIKV), Dengue virus, Sindbis virus (SINV) and Semliki forest virus (SFV). This is 2'-5'-oligoadenylate synthase 3 (OAS3) from Homo sapiens (Human).